Reading from the N-terminus, the 406-residue chain is E3 ubiquitin-protein ligase RING1 (406 aa).

A Phosphothreonine modification is found at threonine 24. Residues 30-234 form a necessary for transcriptional repression region; the sequence is MDGTEIAVSP…GGAGSEDSGD (205 aa). Serine 38 carries the phosphoserine modification. The RING-type zinc finger occupies 48–88; that stretch reads CPICLDMLKNTMTTKECLHRFCSDCIVTALRSGNKECPTCR. A phosphoserine mark is found at serine 140, serine 187, and serine 190. Disordered regions lie at residues 148–263 and 309–354; these read QAMH…GEIE and QQQE…PSLE. The segment covering 175–187 has biased composition (acidic residues); that stretch reads EPGEGEGDGEDVS. The short motif at 201 to 204 is the Nuclear localization signal element; it reads KRPR. Gly residues predominate over residues 205–228; it reads GGGAGGSSVGTGGGGTGGVGGGAG. Phosphothreonine is present on residues threonine 215 and threonine 220. 2 positions are modified to phosphoserine: serine 229 and serine 232. The interval 230–406 is necessary for interaction with CBX2; sequence EDSGDRGGTL…LCYAPTKDPK (177 aa). The segment covering 235 to 244 has biased composition (gly residues); the sequence is RGGTLGGGTL. Pro residues predominate over residues 246–258; it reads PPSPPGAPSPPEP. Serine 248 and serine 254 each carry phosphoserine. A compositionally biased stretch (gly residues) spans 315–343; the sequence is EPGGPGGGASDTGGPDGCGGEGGGAGGGD.

In terms of assembly, component of chromatin-associated Polycomb (PcG) complexes. Interacts with BMI1. Part of the E2F6.com-1 complex in G0 phase composed of E2F6, MGA, MAX, TFDP1, CBX3, BAT8, EUHMTASE1, RING1, RNF2/RING2 MBLR, L3MBTL2 and YAF2. Interacts with CBX2 and PCGF6. Component of a PRC1-like complex. Component of repressive BCOR complex containing Polycomb group subcomplex at least composed of RYBP, PCGF1, BCOR and RNF2/RING2. Interacts with PCGF2, RNF2; CBX6, CBX7 and CBX8. Interacts with PHC2. Interacts with MN1. Interacts with USP26.

Its subcellular location is the nucleus. It is found in the nucleus speckle. It carries out the reaction S-ubiquitinyl-[E2 ubiquitin-conjugating enzyme]-L-cysteine + [acceptor protein]-L-lysine = [E2 ubiquitin-conjugating enzyme]-L-cysteine + N(6)-ubiquitinyl-[acceptor protein]-L-lysine.. Its pathway is protein modification; protein ubiquitination. Its function is as follows. Constitutes one of the E3 ubiquitin-protein ligases that mediate monoubiquitination of 'Lys-119' of histone H2A, thereby playing a central role in histone code and gene regulation. H2A 'Lys-119' ubiquitination gives a specific tag for epigenetic transcriptional repression and participates in X chromosome inactivation of female mammals. Essential component of a Polycomb group (PcG) multiprotein PRC1-like complex, a complex class required to maintain the transcriptionally repressive state of many genes, including Hox genes, throughout development. PcG PRC1 complex acts via chromatin remodeling and modification of histones, rendering chromatin heritably changed in its expressibility. Compared to RNF2/RING2, it does not have the main E3 ubiquitin ligase activity on histone H2A, and it may rather act as a modulator of RNF2/RING2 activity. The sequence is that of E3 ubiquitin-protein ligase RING1 from Homo sapiens (Human).